A 137-amino-acid polypeptide reads, in one-letter code: Large ribosomal subunit protein uL16 (137 aa).

It belongs to the universal ribosomal protein uL16 family. Part of the 50S ribosomal subunit.

Its function is as follows. Binds 23S rRNA and is also seen to make contacts with the A and possibly P site tRNAs. The protein is Large ribosomal subunit protein uL16 of Pseudomonas paraeruginosa (strain DSM 24068 / PA7) (Pseudomonas aeruginosa (strain PA7)).